The sequence spans 188 residues: Threonylcarbamoyl-AMP synthase (188 aa).

The YrdC-like domain maps to 4-188 (VENLQQAVDA…ARSLQVLRQG (185 aa)).

It belongs to the SUA5 family. TsaC subfamily.

The protein resides in the cytoplasm. The catalysed reaction is L-threonine + hydrogencarbonate + ATP = L-threonylcarbamoyladenylate + diphosphate + H2O. In terms of biological role, required for the formation of a threonylcarbamoyl group on adenosine at position 37 (t(6)A37) in tRNAs that read codons beginning with adenine. Catalyzes the conversion of L-threonine, HCO(3)(-)/CO(2) and ATP to give threonylcarbamoyl-AMP (TC-AMP) as the acyladenylate intermediate, with the release of diphosphate. This chain is Threonylcarbamoyl-AMP synthase, found in Vibrio cholerae serotype O1 (strain ATCC 39541 / Classical Ogawa 395 / O395).